We begin with the raw amino-acid sequence, 3122 residues long: Large tegument protein deneddylase (3122 aa).

The tract at residues Met-1–Phe-248 is deubiquitination activity. In terms of domain architecture, Peptidase C76 spans Val-20–Ala-238. Active-site residues include Cys-40, Asp-172, and His-174. 2 disordered regions span residues Gly-281–Ala-367 and Arg-387–Ala-496. A compositionally biased stretch (low complexity) spans Ser-343–Pro-353. Composition is skewed to basic residues over residues Arg-387–Pro-400 and Lys-425–Ala-436. Low complexity predominate over residues Pro-437–Val-454. The interval Leu-548 to Gly-578 is interaction with inner tegument protein. 3 disordered regions span residues Tyr-2494–Gly-2539, Ala-2570–Pro-2974, and Ser-3006–Gly-3059. Composition is skewed to pro residues over residues Thr-2578–Ala-2590 and Pro-2637–Ala-2654. Low complexity predominate over residues Phe-2655–Pro-2667. Over residues Arg-2668–Ala-2681 the composition is skewed to basic residues. 2 stretches are compositionally biased toward pro residues: residues Gly-2690–Val-2700 and Pro-2710–Ala-2719. A compositionally biased stretch (low complexity) spans Ala-2734 to Pro-2743. Pro residues-rich tracts occupy residues Thr-2744–Ala-2753 and Ser-2775–Gly-2785. Low complexity-rich tracts occupy residues Pro-2786–Ser-2807 and His-2814–Val-2825. The span at Ser-2841–Pro-2852 shows a compositional bias: pro residues. A compositionally biased stretch (low complexity) spans Ser-2853–Ala-2867. 11 repeat units span residues Pro-2891 to Leu-2895, Pro-2896 to Leu-2900, Pro-2901 to Leu-2905, Pro-2906 to Leu-2910, Pro-2911 to Leu-2915, Pro-2916 to Leu-2920, Pro-2921 to Leu-2925, Pro-2926 to Leu-2930, Pro-2931 to Leu-2935, Pro-2936 to Leu-2940, and Pro-2941 to Leu-2945. Residues Pro-2891 to Leu-2945 form an 11 X 5 AA tandem repeats of P-Q-P-P-L region. Residues Pro-2891–Pro-2947 show a composition bias toward pro residues. 2 stretches are compositionally biased toward polar residues: residues Arg-2950 to Ser-2959 and Ser-2965 to Pro-2974. The segment covering Ser-3006–Asp-3020 has biased composition (basic and acidic residues). Pro residues predominate over residues Pro-3029–Pro-3045.

This sequence belongs to the herpesviridae large tegument protein family. Interacts with host CUL1 and CUL4A; these interactions inhibit the E3 ligase activity of cullins. Interacts with inner tegument protein. Interacts with capsid vertex specific component CVC2. Interacts with the major capsid protein/MCP. In terms of processing, proteolytically processed, possibly into several polypeptides. Enzymatic activity is only detectable following cleavage of the UL36 protein, which occurs late during viral replication.

It localises to the virion tegument. The protein resides in the host cytoplasm. It is found in the host nucleus. The enzyme catalyses Thiol-dependent hydrolysis of ester, thioester, amide, peptide and isopeptide bonds formed by the C-terminal Gly of ubiquitin (a 76-residue protein attached to proteins as an intracellular targeting signal).. Functionally, large tegument protein that plays multiple roles in the viral cycle. During viral entry, remains associated with the capsid while most of the tegument is detached and participates in the capsid transport toward the host nucleus. Plays a role in the routing of the capsid at the nuclear pore complex and subsequent uncoating. Within the host nucleus, acts as a deneddylase and promotes the degradation of nuclear CRLs (cullin-RING ubiquitin ligases) and thereby stabilizes nuclear CRL substrates, while cytoplasmic CRLs remain unaffected. These modifications prevent host cell cycle S-phase progression and create a favorable environment allowing efficient viral genome replication. Participates later in the secondary envelopment of capsids. Indeed, plays a linker role for the association of the outer viral tegument to the capsids together with the inner tegument protein. The polypeptide is Large tegument protein deneddylase (Human herpesvirus 2 (strain HG52) (HHV-2)).